The sequence spans 318 residues: Tumor necrosis factor ligand superfamily member 11 (318 aa).

Residues 1 to 47 are Cytoplasmic-facing; sequence MRRANRDYGKYLRGSEEMGSCPGVPHEGPLHPAPSAPAPAPPPAASR. The interval 13-41 is disordered; it reads RGSEEMGSCPGVPHEGPLHPAPSAPAPAP. Positions 31–41 are enriched in pro residues; sequence HPAPSAPAPAP. The chain crosses the membrane as a helical; Signal-anchor for type II membrane protein span at residues 48–68; that stretch reads FMFLALLGLGLGQVVCSIALF. The Extracellular portion of the chain corresponds to 69–318; sequence LYFRAQMDPN…FGAFKVQDID (250 aa). One can recognise a THD domain in the interval 165–314; that stretch reads PFAHLTINAA…DATYFGAFKV (150 aa). N-linked (GlcNAc...) asparagine glycans are attached at residues Asn199 and Asn264.

The protein belongs to the tumor necrosis factor family. In terms of assembly, homotrimer. Interacts with TNFRSF11A and TNFRSF11B. Interacts with FBN1 (via N-terminal domain) in a Ca(+2)-dependent manner. Interacts with TNFAIP6 (via both Link and CUB domains). Post-translationally, the soluble form derives from the membrane form by proteolytic processing. As to expression, highly expressed in thymus and bone tissues.

The protein resides in the cell membrane. It is found in the secreted. Its function is as follows. Cytokine that binds to TNFRSF11B/OPG and to TNFRSF11A/RANK. Osteoclast differentiation and activation factor. Augments the ability of dendritic cells to stimulate naive T-cell proliferation. May be an important regulator of interactions between T-cells and dendritic cells and may play a role in the regulation of the T-cell-dependent immune response. May also play an important role in enhanced bone-resorption in humoral hypercalcemia of malignancy. Induces osteoclastogenesis by activating multiple signaling pathways in osteoclast precursor cells, chief among which is induction of long lasting oscillations in the intracellular concentration of Ca (2+) resulting in the activation of NFATC1, which translocates to the nucleus and induces osteoclast-specific gene transcription to allow differentiation of osteoclasts. During osteoclast differentiation, in a TMEM64 and ATP2A2-dependent manner induces activation of CREB1 and mitochondrial ROS generation necessary for proper osteoclast generation. This Rattus norvegicus (Rat) protein is Tumor necrosis factor ligand superfamily member 11 (Tnfsf11).